An 85-amino-acid polypeptide reads, in one-letter code: F(1)-ATPase inhibitor IF(1), mitochondrial (85 aa).

A mitochondrion-targeting transit peptide spans 1–22; it reads MLPRSALARSLQLQRGVAARFY. A coiled-coil region spans residues 41 to 84; sequence KRERATEDFFVRQREKEQLRHLKEQLEKQRKKIDSLENKIDSMT.

The protein belongs to the ATPase inhibitor family. Monomer and homodimer. The protein aggregates less strongly with increasing pH.

The protein localises to the mitochondrion. Its function is as follows. Endogenous ATPase inhibitor, which inhibits specifically the reverse ATPase reaction of mitochondrial F(1)F(0)-type ATP synthase. It limits ATP depletion when the mitochondrial membrane potential falls below a threshold and the F(1)F(0)-ATP synthase starts hydrolyzing ATP to pump protons out of the mitochondrial matrix. Required to avoid the consumption of cellular ATP when the F(1)F(0)-ATP synthase enzyme acts as an ATP hydrolase. Functions through inserting its N-terminal part into the catalytically active F1-ATPase, thereby blocking its rotational movement and subsequently the ATP hydrolase activity. This Saccharomyces cerevisiae (strain ATCC 204508 / S288c) (Baker's yeast) protein is F(1)-ATPase inhibitor IF(1), mitochondrial (INH1).